The sequence spans 839 residues: Taste receptor type 1 member 2 (839 aa).

The signal sequence occupies residues 1–19; sequence MGTRATTICSLFFLLWVLA. Over 20–566 the chain is Extracellular; it reads EPAENSDFYL…VFLEWHEAPT (547 aa). Asn84, Asn248, Asn292, Asn312, Asn368, Asn407, Asn428, Asn487, and Asn527 each carry an N-linked (GlcNAc...) asparagine glycan. Residues 567–587 traverse the membrane as a helical segment; it reads IAVALLAALGFLSTLAILVIF. Over 588-602 the chain is Cytoplasmic; it reads WRHFQTPIVRSAGGP. Residues 603–623 form a helical membrane-spanning segment; sequence MCFLMLTLLLVAYMVVPVYVG. Topologically, residues 624-635 are extracellular; sequence PPKVSTCLCRQA. The helical transmembrane segment at 636–656 threads the bilayer; the sequence is LFPLCFTICISCIAVRSFQIV. Residues 657–681 are Cytoplasmic-facing; sequence CAFKMASRFPRAYSYWVRYQGPYVS. A helical membrane pass occupies residues 682 to 702; that stretch reads MAFITVLKMVIVVIGMLATGL. Topologically, residues 703–727 are extracellular; it reads SPTTRTDPDDPKITIVSCNPNYRNS. Residues 728–748 form a helical membrane-spanning segment; the sequence is LLFNTSLDLLLSVVGFSFAYM. Residues 749–760 lie on the Cytoplasmic side of the membrane; that stretch reads GKELPTNYNEAK. The chain crosses the membrane as a helical span at residues 761–781; it reads FITLSMTFYFTSSVSLCTFMS. Topologically, residues 782–784 are extracellular; sequence AYS. The helical transmembrane segment at 785 to 805 threads the bilayer; that stretch reads GVLVTIVDLLVTVLNLLAISL. Over 806 to 839 the chain is Cytoplasmic; sequence GYFGPKCYMILFYPERNTPAYFNSMIQGYTMRRD.

The protein belongs to the G-protein coupled receptor 3 family. TAS1R subfamily. As to quaternary structure, forms heterodimers with TAS1R3.

It localises to the cell membrane. Functionally, putative taste receptor. TAS1R2/TAS1R3 recognizes diverse natural and synthetic sweeteners. The polypeptide is Taste receptor type 1 member 2 (TAS1R2) (Gorilla gorilla gorilla (Western lowland gorilla)).